The chain runs to 371 residues: 4-hydroxyphenylpyruvate dioxygenase-like protein (371 aa).

VOC domains are found at residues arginine 7–arginine 135 and histidine 160–lysine 328. Fe cation-binding residues include histidine 163, histidine 258, and glutamate 339.

This sequence belongs to the 4HPPD family. Fe cation is required as a cofactor.

The protein localises to the mitochondrion. It catalyses the reaction 3-(4-hydroxyphenyl)pyruvate + O2 = (S)-4-hydroxymandelate + CO2. In terms of biological role, iron-dependent dioxygenase that catalyzes the conversion of 4-hydroxyphenylpyruvate (4-HPPA) to 4-hydroxymandelate (4-HMA) in the mitochondria, one of the steps in the biosynthesis of coenzyme Q10 from tyrosine. The protein is 4-hydroxyphenylpyruvate dioxygenase-like protein of Mus musculus (Mouse).